We begin with the raw amino-acid sequence, 424 residues long: Isoflavipucine cluster transcription factor ATEG_00326 (424 aa).

The segment at residues 10-38 is a DNA-binding region (zn(2)-C6 fungal-type); the sequence is CDRCHGQKLRCIHSGGGPCVRCAKAKATC. Residues 265–286 form a disordered region; the sequence is ARMQTPEGTPERTSESSPSGPP.

It localises to the nucleus. Functionally, transcription factor that regulates the expression of the gene cluster that mediates the biosynthesis of isoflavipucine. This chain is Isoflavipucine cluster transcription factor ATEG_00326, found in Aspergillus terreus (strain NIH 2624 / FGSC A1156).